A 66-amino-acid polypeptide reads, in one-letter code: Photosystem II reaction center protein J (66 aa).

Residues 1-23 (MSGNKSPFPDGRIPDRLPDGRPA) are disordered. The helical transmembrane segment at 37–57 (LWLVATAGGMAVLFVVGLFFY) threads the bilayer.

It belongs to the PsbJ family. As to quaternary structure, PSII is composed of 1 copy each of membrane proteins PsbA, PsbB, PsbC, PsbD, PsbE, PsbF, PsbH, PsbI, PsbJ, PsbK, PsbL, PsbM, PsbT, PsbX, PsbY, PsbZ, Psb30/Ycf12, peripheral proteins PsbO, CyanoQ (PsbQ), PsbU, PsbV and a large number of cofactors. It forms dimeric complexes.

The protein localises to the cellular thylakoid membrane. One of the components of the core complex of photosystem II (PSII). PSII is a light-driven water:plastoquinone oxidoreductase that uses light energy to abstract electrons from H(2)O, generating O(2) and a proton gradient subsequently used for ATP formation. It consists of a core antenna complex that captures photons, and an electron transfer chain that converts photonic excitation into a charge separation. The chain is Photosystem II reaction center protein J from Parasynechococcus marenigrum (strain WH8102).